The following is a 336-amino-acid chain: UPF0284 protein PYRAB00380 (336 aa).

Belongs to the UPF0284 family.

The sequence is that of UPF0284 protein PYRAB00380 from Pyrococcus abyssi (strain GE5 / Orsay).